We begin with the raw amino-acid sequence, 51 residues long: Putative protein LomR (51 aa).

This sequence belongs to the outer membrane OOP (TC 1.B.6) superfamily. Ail family.

In Escherichia coli (strain K12), this protein is Putative protein LomR (lomR).